The sequence spans 243 residues: NADH-ubiquinone oxidoreductase chain 6 (243 aa).

Helical transmembrane passes span 16–36, 41–61, 69–89, 104–124, and 201–221; these read ISSVLDIISILAIFCGISVIV, IISVLFLIGLFASVSSYLILL, AYLIVYIGAISILFLFILMLI, IPLTIILGISLSYSLFQLLPY, and IWLFLASFILLLAMVGSIVII.

Belongs to the complex I subunit 6 family.

It is found in the mitochondrion membrane. It catalyses the reaction a ubiquinone + NADH + 5 H(+)(in) = a ubiquinol + NAD(+) + 4 H(+)(out). In terms of biological role, core subunit of the mitochondrial membrane respiratory chain NADH dehydrogenase (Complex I) that is believed to belong to the minimal assembly required for catalysis. Complex I functions in the transfer of electrons from NADH to the respiratory chain. The immediate electron acceptor for the enzyme is believed to be ubiquinone. The protein is NADH-ubiquinone oxidoreductase chain 6 (ndh-6) of Neurospora crassa (strain ATCC 24698 / 74-OR23-1A / CBS 708.71 / DSM 1257 / FGSC 987).